The following is a 157-amino-acid chain: Endoribonuclease YbeY (157 aa).

Zn(2+) contacts are provided by histidine 122, histidine 126, and histidine 132.

This sequence belongs to the endoribonuclease YbeY family. Zn(2+) serves as cofactor.

Its subcellular location is the cytoplasm. Functionally, single strand-specific metallo-endoribonuclease involved in late-stage 70S ribosome quality control and in maturation of the 3' terminus of the 16S rRNA. The protein is Endoribonuclease YbeY of Bacillus subtilis (strain 168).